Reading from the N-terminus, the 257-residue chain is tRNA pseudouridine synthase A (257 aa).

Residue Asp-43 is the Nucleophile of the active site. Tyr-94 contacts substrate.

It belongs to the tRNA pseudouridine synthase TruA family.

The enzyme catalyses uridine(38/39/40) in tRNA = pseudouridine(38/39/40) in tRNA. In terms of biological role, formation of pseudouridine at positions 38, 39 and 40 in the anticodon stem and loop of transfer RNAs. The polypeptide is tRNA pseudouridine synthase A (Pyrobaculum arsenaticum (strain DSM 13514 / JCM 11321 / PZ6)).